Here is a 1087-residue protein sequence, read N- to C-terminus: Transcription factor AP2-Z (1087 aa).

A DNA-binding region (AP2) is located at residues 586-682 (GRVYKVIVRG…IKYNSVPDSL (97 aa)).

Belongs to the AP2/ERF transcription factor family. AP2 subfamily.

Its subcellular location is the nucleus. The protein localises to the chromosome. Functionally, transcription factor which binds the 5'-[TC][AC]TG[AT]AC[AG]-3' motif. During the mosquito vector stage, plays an essential role in the zygote for de novo transcription of genes required for ookinete formation. The protein is Transcription factor AP2-Z of Plasmodium berghei (strain Anka).